The primary structure comprises 368 residues: Phosphate acyltransferase (368 aa).

It belongs to the PlsX family. Homodimer. Probably interacts with PlsY.

It localises to the cytoplasm. The catalysed reaction is a fatty acyl-[ACP] + phosphate = an acyl phosphate + holo-[ACP]. It participates in lipid metabolism; phospholipid metabolism. In terms of biological role, catalyzes the reversible formation of acyl-phosphate (acyl-PO(4)) from acyl-[acyl-carrier-protein] (acyl-ACP). This enzyme utilizes acyl-ACP as fatty acyl donor, but not acyl-CoA. The chain is Phosphate acyltransferase from Herpetosiphon aurantiacus (strain ATCC 23779 / DSM 785 / 114-95).